The chain runs to 474 residues: Nuclear receptor ROR-alpha B (474 aa).

Residues 14–89 constitute a DNA-binding region (nuclear receptor); it reads SIPCKICGDK…VGMSRDAVKF (76 aa). NR C4-type zinc fingers lie at residues 17 to 37 and 53 to 72; these read CKIC…CEGC and CPRQ…CQHC. Basic and acidic residues predominate over residues 98–124; sequence DSLFAEVQKHRQQQQDDKTGDESEKNQ. Residues 98–144 form a disordered region; sequence DSLFAEVQKHRQQQQDDKTGDESEKNQESQAPGEAEPLTPSYALSSS. In terms of domain architecture, NR LBD spans 223 to 461; that stretch reads DLEHLSENIC…TRFPPLYKEL (239 aa). An AF-2 region spans residues 450–461; the sequence is VHTRFPPLYKEL.

This sequence belongs to the nuclear hormone receptor family.

The protein resides in the nucleus. Its function is as follows. Nuclear receptor that binds DNA as a monomer to ROR response elements (RORE). Required for proper cerebellum development. This chain is Nuclear receptor ROR-alpha B (rorab), found in Danio rerio (Zebrafish).